Consider the following 258-residue polypeptide: Putative L-lactate dehydrogenase operon regulatory protein (258 aa).

The 69-residue stretch at 6–74 (RRLSDEVADR…RGGGTFIRWR (69 aa)) folds into the HTH gntR-type domain. The segment at residues 34–53 (ERQLAMQLGVSRNSLREALA) is a DNA-binding region (H-T-H motif).

Its function is as follows. May be a regulatory protein for the LCT genes. The sequence is that of Putative L-lactate dehydrogenase operon regulatory protein (lldR) from Escherichia coli (strain K12).